A 263-amino-acid polypeptide reads, in one-letter code: Putative S-adenosyl-L-methionine-dependent methyltransferase Mkms_0098 (263 aa).

Residues Asp-121 and 150–151 (ES) each bind S-adenosyl-L-methionine.

It belongs to the UPF0677 family.

Exhibits S-adenosyl-L-methionine-dependent methyltransferase activity. The polypeptide is Putative S-adenosyl-L-methionine-dependent methyltransferase Mkms_0098 (Mycobacterium sp. (strain KMS)).